The primary structure comprises 408 residues: Aminoacylase-1A (408 aa).

H80 serves as a coordination point for Zn(2+). D82 is a catalytic residue. D113 provides a ligand contact to Zn(2+). E147 functions as the Proton acceptor in the catalytic mechanism. Zn(2+) is bound by residues E148, E175, and H373. S408 carries the post-translational modification Phosphoserine.

It belongs to the peptidase M20A family. Homodimer. Requires Zn(2+) as cofactor. The N-terminus is blocked.

Its subcellular location is the cytoplasm. The enzyme catalyses an N-acyl-L-amino acid + H2O = an L-alpha-amino acid + a carboxylate. The catalysed reaction is an N-acetyl-L-cysteine-S-conjugate + H2O = an S-substituted L-cysteine + acetate. Its function is as follows. Involved in the hydrolysis of N-acylated or N-acetylated amino acids (except L-aspartate). The protein is Aminoacylase-1A (Acy1a) of Rattus norvegicus (Rat).